Here is an 81-residue protein sequence, read N- to C-terminus: ATP synthase subunit c, chloroplastic (81 aa).

2 consecutive transmembrane segments (helical) span residues 3–23 (PIIS…ASIG) and 57–77 (LAFM…LLFA).

This sequence belongs to the ATPase C chain family. F-type ATPases have 2 components, F(1) - the catalytic core - and F(0) - the membrane proton channel. F(1) has five subunits: alpha(3), beta(3), gamma(1), delta(1), epsilon(1). F(0) has four main subunits: a(1), b(1), b'(1) and c(10-14). The alpha and beta chains form an alternating ring which encloses part of the gamma chain. F(1) is attached to F(0) by a central stalk formed by the gamma and epsilon chains, while a peripheral stalk is formed by the delta, b and b' chains.

It localises to the plastid. The protein resides in the chloroplast thylakoid membrane. In terms of biological role, f(1)F(0) ATP synthase produces ATP from ADP in the presence of a proton or sodium gradient. F-type ATPases consist of two structural domains, F(1) containing the extramembraneous catalytic core and F(0) containing the membrane proton channel, linked together by a central stalk and a peripheral stalk. During catalysis, ATP synthesis in the catalytic domain of F(1) is coupled via a rotary mechanism of the central stalk subunits to proton translocation. Its function is as follows. Key component of the F(0) channel; it plays a direct role in translocation across the membrane. A homomeric c-ring of between 10-14 subunits forms the central stalk rotor element with the F(1) delta and epsilon subunits. The chain is ATP synthase subunit c, chloroplastic from Welwitschia mirabilis (Tree tumbo).